Reading from the N-terminus, the 109-residue chain is MEVTAKLRGAAISAQKVRLVADEVRGKSIERALDILAFSNKKGAVFVKKCLESAIANAEHNHGLDIDTLKVSTIYVDEGITLKRILPRAKGRADRISKRTCHITVKVGE.

Belongs to the universal ribosomal protein uL22 family. In terms of assembly, part of the 50S ribosomal subunit.

Functionally, this protein binds specifically to 23S rRNA; its binding is stimulated by other ribosomal proteins, e.g. L4, L17, and L20. It is important during the early stages of 50S assembly. It makes multiple contacts with different domains of the 23S rRNA in the assembled 50S subunit and ribosome. Its function is as follows. The globular domain of the protein is located near the polypeptide exit tunnel on the outside of the subunit, while an extended beta-hairpin is found that lines the wall of the exit tunnel in the center of the 70S ribosome. The sequence is that of Large ribosomal subunit protein uL22 from Psychrobacter sp. (strain PRwf-1).